Reading from the N-terminus, the 83-residue chain is Small ribosomal subunit protein bS16 (83 aa).

Belongs to the bacterial ribosomal protein bS16 family.

This is Small ribosomal subunit protein bS16 from Shewanella amazonensis (strain ATCC BAA-1098 / SB2B).